A 539-amino-acid chain; its full sequence is MAKTPAEKPATAAKKPAAPKAAAAPKAAAAKAPAAAKAPAAKKPAAPKAAAAPKAPAAGLEGATGRLVQIIGAVVDIEFDGALPAILNAVETVNTATGQRLVFEVAQHLGQSTVRAIAMDATEGLVRGQPVRDTGEPIRVPVGPGTLGRIMNVIGEPIDEQGPIRSDISRTIHRDAPSFAEQTNTAEVLVTGIKVIDLMCPYTKGGKIGLFGGAGVGKTVTMQELINNIAKAYGGYSVLAGVGERTREGNDLYHEMIESNVNVDPKANNGSTEGSRCALVYGQMNEPPGARARVALTGLSIAEYFRDEEGKDVLLFVDNIFRFTQAGAEVSALLGRIPSAVGYQPTLATEMGNLQERITSTNKGSITSVQAIYVPADDLTDPAPATSFAHLDATTVLSRDIAAQAIFPAVDPLDSTSRIMDPLVIGEEHYTVARRVQEVLQQYKALKDIIAILGMDELSEEDKLVVARARKIQRFLSQPFHVAEQFTNTPGAFVQLKDTIRSFKGIVDGEYDHLPEGAFYMVGPIEEAVAKAEKMAAEA.

The tract at residues 1 to 44 is disordered; that stretch reads MAKTPAEKPATAAKKPAAPKAAAAPKAAAAKAPAAAKAPAAKKP. 212–219 is an ATP binding site; sequence GGAGVGKT.

The protein belongs to the ATPase alpha/beta chains family. In terms of assembly, F-type ATPases have 2 components, CF(1) - the catalytic core - and CF(0) - the membrane proton channel. CF(1) has five subunits: alpha(3), beta(3), gamma(1), delta(1), epsilon(1). CF(0) has three main subunits: a(1), b(2) and c(9-12). The alpha and beta chains form an alternating ring which encloses part of the gamma chain. CF(1) is attached to CF(0) by a central stalk formed by the gamma and epsilon chains, while a peripheral stalk is formed by the delta and b chains.

It localises to the cell inner membrane. The catalysed reaction is ATP + H2O + 4 H(+)(in) = ADP + phosphate + 5 H(+)(out). Its function is as follows. Produces ATP from ADP in the presence of a proton gradient across the membrane. The catalytic sites are hosted primarily by the beta subunits. This Caulobacter vibrioides (strain ATCC 19089 / CIP 103742 / CB 15) (Caulobacter crescentus) protein is ATP synthase subunit beta.